We begin with the raw amino-acid sequence, 535 residues long: T-complex protein 1 subunit zeta 1 (535 aa).

The protein belongs to the TCP-1 chaperonin family. Heterooligomeric complex of about 850 to 900 kDa that forms two stacked rings, 12 to 16 nm in diameter.

It localises to the cytoplasm. Functionally, molecular chaperone; assists the folding of proteins upon ATP hydrolysis. Known to play a role, in vitro, in the folding of actin and tubulin. This chain is T-complex protein 1 subunit zeta 1, found in Arabidopsis thaliana (Mouse-ear cress).